The following is a 399-amino-acid chain: MAKEKFNRTKPHVNIGTIGHVDHGKTTLSAAISAVLSLKGLAEMKDYDNIDNAPEEKERGITIATSHIEYETENRHYAHVDCPGHADYVKNMITGAAQMDGAILVVSAADGPMPQTREHILLSRQVGVPHIVVFLNKQDMVDDQELLELVEMEVRELLSAYEFPGDDTPIVAGSALRALEEAKAGNVGEWGEKVLKLMAEVDAYIPTPERDTEKTFLMPVEDVFSIAGRGTVVTGRIERGVVKVGDEVEIVGIRPTQKTTVTGVEMFRKELEKGEAGDNVGVLLRGTKKEEVERGMVLCKPGSITPHKKFEGEIYVLSKEEGGRHTPFFTNYRPQFYVRTTDVTGSITLPEGVEMVMPGDNVKITVELISPVALELGTKFAIREGGRTVGAGVVSNIIE.

The tr-type G domain occupies 10–209; sequence KPHVNIGTIG…EVDAYIPTPE (200 aa). Residues 19–26 are G1; that stretch reads GHVDHGKT. 19-26 lines the GTP pocket; that stretch reads GHVDHGKT. Thr26 is a Mg(2+) binding site. The G2 stretch occupies residues 60-64; sequence GITIA. The interval 81 to 84 is G3; the sequence is DCPG. GTP-binding positions include 81-85 and 136-139; these read DCPGH and NKQD. Residues 136–139 are G4; sequence NKQD. Positions 174–176 are G5; it reads SAL.

Belongs to the TRAFAC class translation factor GTPase superfamily. Classic translation factor GTPase family. EF-Tu/EF-1A subfamily. In terms of assembly, monomer.

The protein resides in the cytoplasm. It carries out the reaction GTP + H2O = GDP + phosphate + H(+). Functionally, GTP hydrolase that promotes the GTP-dependent binding of aminoacyl-tRNA to the A-site of ribosomes during protein biosynthesis. The chain is Elongation factor Tu from Helicobacter pylori (strain ATCC 700392 / 26695) (Campylobacter pylori).